We begin with the raw amino-acid sequence, 281 residues long: Phytanoyl-CoA dioxygenase 1 (281 aa).

2-oxoglutarate contacts are provided by residues Lys-98, Met-137, 152–154 (HQD), and Trp-169. Residues His-152 and Asp-154 each coordinate Fe cation. Fe cation is bound at residue His-237. The 2-oxoglutarate site is built by Ser-239 and Arg-248.

This sequence belongs to the PhyH family. The cofactor is Fe cation. L-ascorbate serves as cofactor.

It catalyses the reaction phytanoyl-CoA + 2-oxoglutarate + O2 = 2-hydroxyphytanoyl-CoA + succinate + CO2. Its pathway is lipid metabolism; fatty acid metabolism. Its function is as follows. Converts phytanoyl-CoA to 2-hydroxyphytanoyl-CoA. This is Phytanoyl-CoA dioxygenase 1 from Oryza sativa subsp. japonica (Rice).